Reading from the N-terminus, the 712-residue chain is Rap1 GTPase-activating protein 2 (712 aa).

The disordered stretch occupies residues 1 to 33 (MLAGLKVKKQELANSSDVTLPDRPLSPPLTAPP). Serine 26 is modified (phosphoserine). Residue threonine 30 is modified to Phosphothreonine. The 217-residue stretch at 229 to 445 (IVSYDEHDVN…RTRAALLDNL (217 aa)) folds into the Rap-GAP domain. Residues serine 488, serine 495, serine 525, serine 539, serine 545, serine 593, and serine 594 each carry the phosphoserine modification. The disordered stretch occupies residues 529-712 (AAATAKNQSR…LSHASSSAGH (184 aa)). The span at 566–594 (DSASSTPKTPDGGHSSQEIKSETSSNPSS) shows a compositional bias: polar residues. Residues 599–612 (PNKEKPFIKLKENG) show a composition bias toward basic and acidic residues. Residues 617–629 (SRSSSSTSSFSST) show a composition bias toward low complexity. The span at 641–652 (SGSSQPSTTSPF) shows a compositional bias: polar residues. Residues 660–669 (SPSPSSESPS) show a composition bias toward low complexity. The segment covering 681–694 (RSPTDAKSRNSPRS) has biased composition (polar residues).

It localises to the cytoplasm. Its function is as follows. GTPase activator for the nuclear Ras-related regulatory protein RAP-1A (KREV-1), converting it to the putatively inactive GDP-bound state. The sequence is that of Rap1 GTPase-activating protein 2 (Rap1gap2) from Mus musculus (Mouse).